Reading from the N-terminus, the 243-residue chain is MTNLLINVDHVGTLRNAREETFPDPVHAAARCEQAGADGIVFHLREDRRHITERDVRLLAETVNGKLDFELSTEEEVVSICCDVVPDLATLVPERREEVTTEGGLDVTASRPRLNAVTDRLYDAGVDQVSLFVDPVPAQIEATAAVGANCVELHTGDFAEASTEAARREEAERLAAAADAAHEAGLRVHAGHGLDYNNFSLFRETVPHVAEVSIGFAVMARAILVGMDQAVRDMRATVANAQP.

3-amino-2-oxopropyl phosphate is bound at residue asparagine 7. A 1-deoxy-D-xylulose 5-phosphate-binding site is contributed by 9-10 (DH). Arginine 18 is a 3-amino-2-oxopropyl phosphate binding site. Histidine 43 serves as the catalytic Proton acceptor. Arginine 45 and histidine 50 together coordinate 1-deoxy-D-xylulose 5-phosphate. Residue glutamate 70 is the Proton acceptor of the active site. Threonine 100 provides a ligand contact to 1-deoxy-D-xylulose 5-phosphate. The active-site Proton donor is histidine 192. 3-amino-2-oxopropyl phosphate is bound by residues glycine 193 and 215 to 216 (GF).

Belongs to the PNP synthase family. In terms of assembly, homooctamer; tetramer of dimers.

The protein resides in the cytoplasm. It catalyses the reaction 3-amino-2-oxopropyl phosphate + 1-deoxy-D-xylulose 5-phosphate = pyridoxine 5'-phosphate + phosphate + 2 H2O + H(+). It functions in the pathway cofactor biosynthesis; pyridoxine 5'-phosphate biosynthesis; pyridoxine 5'-phosphate from D-erythrose 4-phosphate: step 5/5. Catalyzes the complicated ring closure reaction between the two acyclic compounds 1-deoxy-D-xylulose-5-phosphate (DXP) and 3-amino-2-oxopropyl phosphate (1-amino-acetone-3-phosphate or AAP) to form pyridoxine 5'-phosphate (PNP) and inorganic phosphate. This is Pyridoxine 5'-phosphate synthase from Salinibacter ruber (strain DSM 13855 / M31).